A 453-amino-acid chain; its full sequence is Homogentisate 1,2-dioxygenase (453 aa).

Histidine 306 functions as the Proton acceptor in the catalytic mechanism. Fe cation is bound by residues histidine 349 and glutamate 355. Residues tyrosine 364 and histidine 385 each contribute to the homogentisate site. Fe cation is bound at residue histidine 385.

It belongs to the homogentisate dioxygenase family. As to quaternary structure, hexamer; dimer of trimers. Fe cation serves as cofactor.

The catalysed reaction is homogentisate + O2 = 4-maleylacetoacetate + H(+). It participates in amino-acid degradation; L-phenylalanine degradation; acetoacetate and fumarate from L-phenylalanine: step 4/6. Its function is as follows. Involved in the catabolism of homogentisate (2,5-dihydroxyphenylacetate or 2,5-OH-PhAc), a central intermediate in the degradation of phenylalanine and tyrosine. Catalyzes the oxidative ring cleavage of the aromatic ring of homogentisate to yield maleylacetoacetate. The sequence is that of Homogentisate 1,2-dioxygenase from Rhizobium etli (strain ATCC 51251 / DSM 11541 / JCM 21823 / NBRC 15573 / CFN 42).